We begin with the raw amino-acid sequence, 158 residues long: PRA1 family protein 2 (158 aa).

Transmembrane regions (helical) follow at residues 36–58 (NLNF…TLFT), 62–79 (LLVA…LFFV), 88–108 (FAVL…VIVI), and 113–133 (GLTL…HSAL).

Belongs to the PRA1 family.

It is found in the membrane. Its function is as follows. May act as a general Rab protein regulator. This Dictyostelium discoideum (Social amoeba) protein is PRA1 family protein 2 (prafB).